Here is a 217-residue protein sequence, read N- to C-terminus: 3,4-dihydroxy-2-butanone 4-phosphate synthase (217 aa).

D-ribulose 5-phosphate-binding positions include 37-38 (RE), Asp-42, 150-154 (RRGHT), and Glu-174. Glu-38 is a binding site for Mg(2+). His-153 contacts Mg(2+).

It belongs to the DHBP synthase family. Homodimer. Mg(2+) serves as cofactor. Mn(2+) is required as a cofactor.

The enzyme catalyses D-ribulose 5-phosphate = (2S)-2-hydroxy-3-oxobutyl phosphate + formate + H(+). It functions in the pathway cofactor biosynthesis; riboflavin biosynthesis; 2-hydroxy-3-oxobutyl phosphate from D-ribulose 5-phosphate: step 1/1. In terms of biological role, catalyzes the conversion of D-ribulose 5-phosphate to formate and 3,4-dihydroxy-2-butanone 4-phosphate. This Yersinia enterocolitica serotype O:8 / biotype 1B (strain NCTC 13174 / 8081) protein is 3,4-dihydroxy-2-butanone 4-phosphate synthase.